Reading from the N-terminus, the 139-residue chain is Thioredoxin H-type (139 aa).

In terms of domain architecture, Thioredoxin spans 20–132 (ELAGGNVHLI…LHKKITAILD (113 aa)). Active-site nucleophile residues include cysteine 58 and cysteine 61. Residues cysteine 58 and cysteine 61 are joined by a disulfide bond.

The protein resides in the cytoplasm. Functionally, participates in various redox reactions through the reversible oxidation of the active center dithiol to a disulfide. The H form is known to activate a number of cytosolic enzymes. The sequence is that of Thioredoxin H-type from Populus jackii (Balm of Gilead).